We begin with the raw amino-acid sequence, 41 residues long: Large ribosomal subunit protein bL36 (41 aa).

This sequence belongs to the bacterial ribosomal protein bL36 family.

In Methylocella silvestris (strain DSM 15510 / CIP 108128 / LMG 27833 / NCIMB 13906 / BL2), this protein is Large ribosomal subunit protein bL36.